Reading from the N-terminus, the 392-residue chain is Stilbene synthase 4 (392 aa).

Position 55-58 (55-58 (KFNR)) interacts with substrate. The active site involves cysteine 164. Substrate is bound by residues leucine 267 and 305–307 (GGP).

This sequence belongs to the thiolase-like superfamily. Chalcone/stilbene synthases family. In terms of assembly, homodimer.

It localises to the cytoplasm. The catalysed reaction is 4-coumaroyl-CoA + 3 malonyl-CoA + 3 H(+) = trans-resveratrol + 4 CO2 + 4 CoA. It functions in the pathway phytoalexin biosynthesis; 3,4',5-trihydroxystilbene biosynthesis; 3,4',5-trihydroxystilbene from trans-4-coumarate: step 2/2. In terms of biological role, mediates resistance to pathogens which are sensitive to stilbenes. This Vitis vinifera (Grape) protein is Stilbene synthase 4.